The chain runs to 253 residues: LexA repressor (253 aa).

The H-T-H motif DNA-binding region spans 26-46 (FDEMKDALNLRSKSGIHRLIS). Residues 73 to 97 (MPAATGKPPLAESGPPPVTAPATDE) form a disordered region. Residues Ser174 and Lys212 each act as for autocatalytic cleavage activity in the active site.

The protein belongs to the peptidase S24 family. Homodimer.

The catalysed reaction is Hydrolysis of Ala-|-Gly bond in repressor LexA.. In terms of biological role, represses a number of genes involved in the response to DNA damage (SOS response), including recA and lexA. In the presence of single-stranded DNA, RecA interacts with LexA causing an autocatalytic cleavage which disrupts the DNA-binding part of LexA, leading to derepression of the SOS regulon and eventually DNA repair. This is LexA repressor from Gluconacetobacter diazotrophicus (strain ATCC 49037 / DSM 5601 / CCUG 37298 / CIP 103539 / LMG 7603 / PAl5).